A 290-amino-acid polypeptide reads, in one-letter code: Ribosomal RNA small subunit methyltransferase A (290 aa).

6 residues coordinate S-adenosyl-L-methionine: Asn27, Leu29, Gly54, Glu75, Asp100, and Asn125.

This sequence belongs to the class I-like SAM-binding methyltransferase superfamily. rRNA adenine N(6)-methyltransferase family. RsmA subfamily.

The protein localises to the cytoplasm. The enzyme catalyses adenosine(1518)/adenosine(1519) in 16S rRNA + 4 S-adenosyl-L-methionine = N(6)-dimethyladenosine(1518)/N(6)-dimethyladenosine(1519) in 16S rRNA + 4 S-adenosyl-L-homocysteine + 4 H(+). Specifically dimethylates two adjacent adenosines (A1518 and A1519) in the loop of a conserved hairpin near the 3'-end of 16S rRNA in the 30S particle. May play a critical role in biogenesis of 30S subunits. The protein is Ribosomal RNA small subunit methyltransferase A of Streptococcus pyogenes serotype M3 (strain ATCC BAA-595 / MGAS315).